The sequence spans 352 residues: MNELELLGPRAYGEALGRAVLKATAEDFQVDEVLDIPLSGDGEHLWLWVEKRGLNTEEAARRLARAAGVQLRTVSYAGLKDRQALTRQWFSIQLPGKADPDLSAAQDDTLQILKSGRHKRKLQRGAHAANGFTLRLTQLDADKDALNQRLETIARQGIPNYFGAQRFGYQGGNLGEARDYAARKALPEQRAVRSRLLSTARSYLFNRVLAARVADGSWQKAQVGDLLAFTDSRSFFPAGVDECSDPRLAILDLHPTGPQWGEGPSPAGGATAALENTVADDESVLRDWLVRAGMEHERRILRLPIGRLTWHYPESDILQLEFVLPPGCFATVLVRELIDLVPVGQTDSSCVF.

The active-site Nucleophile is the Asp81. Residues 157–303 (GIPNYFGAQR…MEHERRILRL (147 aa)) form the TRUD domain.

It belongs to the pseudouridine synthase TruD family.

The enzyme catalyses uridine(13) in tRNA = pseudouridine(13) in tRNA. Its function is as follows. Responsible for synthesis of pseudouridine from uracil-13 in transfer RNAs. The sequence is that of tRNA pseudouridine synthase D from Pseudomonas syringae pv. syringae (strain B728a).